The sequence spans 623 residues: Chaperone protein HtpG (623 aa).

Positions 1 to 336 (MSMKGQETRG…SNDLPLNVSR (336 aa)) are a; substrate-binding. Residues 337 to 551 (EILQDSRVTQ…ADEMSTQMAK (215 aa)) form a b region. The segment at 552–623 (LFAAAGQEAP…IRRMNKLLSA (72 aa)) is c.

This sequence belongs to the heat shock protein 90 family. Homodimer.

Its subcellular location is the cytoplasm. Functionally, molecular chaperone. Has ATPase activity. In Serratia proteamaculans (strain 568), this protein is Chaperone protein HtpG.